Reading from the N-terminus, the 328-residue chain is Flap endonuclease 1 (328 aa).

Residues Met-1–Lys-98 are N-domain. Mg(2+) contacts are provided by Asp-27, Asp-80, Glu-152, Glu-154, Asp-173, Asp-175, and Asp-227. Residues Ala-116–Gly-248 form an I-domain region. Residues Ala-320–Phe-328 are interaction with PCNA.

This sequence belongs to the XPG/RAD2 endonuclease family. FEN1 subfamily. In terms of assembly, interacts with PCNA. PCNA stimulates the nuclease activity without altering cleavage specificity. Mg(2+) serves as cofactor.

Functionally, structure-specific nuclease with 5'-flap endonuclease and 5'-3' exonuclease activities involved in DNA replication and repair. During DNA replication, cleaves the 5'-overhanging flap structure that is generated by displacement synthesis when DNA polymerase encounters the 5'-end of a downstream Okazaki fragment. Binds the unpaired 3'-DNA end and kinks the DNA to facilitate 5' cleavage specificity. Cleaves one nucleotide into the double-stranded DNA from the junction in flap DNA, leaving a nick for ligation. Also involved in the base excision repair (BER) pathway. Acts as a genome stabilization factor that prevents flaps from equilibrating into structures that lead to duplications and deletions. Also possesses 5'-3' exonuclease activity on nicked or gapped double-stranded DNA. The chain is Flap endonuclease 1 from Methanosphaera stadtmanae (strain ATCC 43021 / DSM 3091 / JCM 11832 / MCB-3).